We begin with the raw amino-acid sequence, 1463 residues long: Collagen alpha-1(I) chain (1463 aa).

A signal peptide spans 1–22 (MFSFVDLRLLLLLAATALLTHG). A propeptide spans 23–161 (QEEGQEEGQE…PPGLGGNFAP (139 aa)) (N-terminal propeptide). The region spanning 38 to 96 (VTCVQNGLRYHDRDVWKPVPCQICVCDNGNVLCDDVICDELKDCPNAKVPTDECCPVCP) is the VWFC domain. A disordered region spans residues 98–1217 (GQESPTDQET…AHDGGRYYRA (1120 aa)). Over residues 138 to 153 (PGLPGPPGPPGPPGPP) the composition is skewed to pro residues. Glutamine 162 is subject to Pyrrolidone carboxylic acid. A nonhelical region (N-terminal) region spans residues 162–177 (QLSYGYDEKSTGISVP). An Allysine modification is found at lysine 170. A Phosphoserine modification is found at serine 171. Positions 178-1191 (GPMGPSGPRG…PGPPGPPGPP (1014 aa)) are triple-helical region. 11 positions are modified to 4-hydroxyproline: proline 189, proline 192, proline 195, proline 204, proline 207, proline 210, proline 225, proline 240, proline 246, proline 255, and proline 261. The span at 197-216 (PQGFQGPPGEPGEPGASGPM) shows a compositional bias: low complexity. A compositionally biased stretch (basic and acidic residues) spans 228–242 (NGDDGEAGKPGRPGE). Position 264 is a 5-hydroxylysine; alternate (lysine 264). Lysine 264 is a glycosylation site (O-linked (Gal...) hydroxylysine; alternate). A Phosphoserine modification is found at serine 270. Residues lysine 276 and lysine 285 each carry the 5-hydroxylysine modification. The segment covering 278–294 (DAGPAGPKGEPGSPGEN) has biased composition (low complexity). A 4-hydroxyproline mark is found at proline 288, proline 291, proline 297, proline 306, and proline 312. Over residues 317-330 (PAGARGNDGATGAA) the composition is skewed to low complexity. Positions 332-344 (PPGPTGPAGPPGF) are enriched in pro residues. A 4-hydroxyproline mark is found at proline 333, proline 342, and proline 345. A compositionally biased stretch (gly residues) spans 349–358 (GAKGEGGPQG). 4-hydroxyproline is present on residues proline 372, proline 375, proline 387, proline 393, proline 402, proline 408, proline 411, and proline 426. Residues 378–417 (AGAAGPAGNPGADGQPGAKGANGAPGIAGAPGFPGARGPS) show a composition bias toward low complexity. Lysine 429 is subject to 5-hydroxylysine. Proline 435, proline 438, proline 450, proline 459, proline 474, proline 480, proline 489, and proline 495 each carry 4-hydroxyproline. Positions 484–493 (GERGGPGSRG) are enriched in gly residues. The span at 494–525 (FPGADGVAGPKGPAGERGAPGPAGPKGSPGEA) shows a compositional bias: low complexity. A 5-hydroxylysine modification is found at lysine 504. 4-hydroxyproline occurs at positions 513, 522, 528, 534, 543, 546, 555, 564, 570, 582, 591, 600, 603, 621, 639, 645, 651, 657, 663, 669, 681, 690, 702, 714, 717, 723, 729, and 738. Positions 537–563 (KGLTGSPGSPGPDGKTGPPGPAGQDGR) are enriched in low complexity. Residues 572 to 591 (ARGQAGVMGFPGPKGAAGEP) show a composition bias toward low complexity. Low complexity predominate over residues 633–660 (QGPAGSPGFQGLPGPAGPPGEAGKPGEQ). Positions 695-723 (PRGANGAPGNDGAKGDAGAPGAPGSQGAP) are enriched in low complexity. Positions 744–746 (RGD) match the Cell attachment site motif. Position 750 is a 5-hydroxylysine (lysine 750). 4-hydroxyproline is present on residues proline 756, proline 771, and proline 777. A compositionally biased stretch (low complexity) spans 783–797 (AGPSGPAGPTGARGA). Serine 786 carries the phosphoserine modification. Proline 798, proline 804, proline 807, proline 816, proline 822, proline 840, proline 849, and proline 858 each carry 4-hydroxyproline. Positions 810–837 (AGFAGPPGADGQPGAKGEPGDAGAKGDA) are enriched in low complexity. The span at 839–851 (PPGPAGPAGPPGP) shows a compositional bias: pro residues. Over residues 852–882 (IGNVGAPGPKGARGSAGPPGATGFPGAAGRV) the composition is skewed to low complexity. Position 861 is a 5-hydroxylysine (lysine 861). 4-hydroxyproline is present on residues proline 870 and proline 876. A 3-hydroxyproline modification is found at proline 884. Proline 885, proline 894, proline 897, proline 918, proline 927, proline 936, proline 945, proline 963, proline 972, proline 975, proline 981, proline 996, proline 1002, proline 1008, proline 1017, and proline 1023 each carry 4-hydroxyproline. Residues 930-954 (AGEKGAPGADGPAGAPGTPGPQGIA) are compositionally biased toward low complexity. The segment covering 995–1005 (PPGPMGPPGLA) has biased composition (pro residues). Residue lysine 1032 is modified to 5-hydroxylysine. The span at 1041–1056 (AGPPGAPGAPGAPGPV) shows a compositional bias: pro residues. 3 positions are modified to 4-hydroxyproline: proline 1044, proline 1047, and proline 1050. Positions 1077–1091 (IGPVGARGPAGPQGP) are enriched in low complexity. The Cell attachment site signature appears at 1092-1094 (RGD). The span at 1092-1106 (RGDKGETGEQGDRGI) shows a compositional bias: basic and acidic residues. Lysine 1095 is subject to 5-hydroxylysine. Lysine 1107 carries the post-translational modification 5-hydroxylysine; alternate. A glycan (O-linked (Gal...) hydroxylysine; alternate) is linked at lysine 1107. Proline 1119, proline 1122, proline 1125, proline 1143, and proline 1158 each carry 4-hydroxyproline. Residues 1125–1149 (PGEQGPSGASGPAGPRGPPGSAGSP) are compositionally biased toward low complexity. Proline 1163 carries the post-translational modification 3-hydroxyproline. A 4-hydroxyproline modification is found at proline 1164. Over residues 1176-1191 (AGPPGPPGPPGPPGPP) the composition is skewed to pro residues. Proline 1178 is subject to 3-hydroxyproline. 4-hydroxyproline is present on proline 1179. A 3-hydroxyproline modification is found at proline 1181. At proline 1182 the chain carries 4-hydroxyproline. 3-hydroxyproline is present on proline 1184. 3 positions are modified to 4-hydroxyproline: proline 1185, proline 1188, and proline 1191. A nonhelical region (C-terminal) region spans residues 1192–1215 (SGGYDLSFLPQPPQEKAHDGGRYY). The segment covering 1206–1217 (EKAHDGGRYYRA) has biased composition (basic and acidic residues). Lysine 1207 is modified (allysine). Residues 1218–1463 (DDANVVRDRD…GFDVGPACFL (246 aa)) constitute a propeptide, C-terminal propeptide. In terms of domain architecture, Fibrillar collagen NC1 spans 1228 to 1463 (LEVDTTLKSL…GFDVGPACFL (236 aa)). 3 cysteine pairs are disulfide-bonded: cysteine 1258–cysteine 1290, cysteine 1298–cysteine 1461, and cysteine 1369–cysteine 1414. Ca(2+)-binding residues include aspartate 1276, asparagine 1278, glutamine 1279, cysteine 1281, and aspartate 1284.

The protein belongs to the fibrillar collagen family. In terms of assembly, trimers of one alpha 2(I) and two alpha 1(I) chains. Interacts with MRC2. Interacts with TRAM2. Interacts with MFAP4 in a Ca (2+)-dependent manner. Post-translationally, contains mostly 4-hydroxyproline. Proline residues at the third position of the tripeptide repeating unit (G-X-Y) are hydroxylated in some or all of the chains. Contains 3-hydroxyproline at a few sites. This modification occurs on the first proline residue in the sequence motif Gly-Pro-Hyp, where Hyp is 4-hydroxyproline. In terms of processing, lysine residues at the third position of the tripeptide repeating unit (G-X-Y) are 5-hydroxylated in some or all of the chains. Post-translationally, O-glycosylated on hydroxylated lysine residues. The O-linked glycan consists of a Glc-Gal disaccharide. Forms the fibrils of tendon, ligaments and bones. In bones the fibrils are mineralized with calcium hydroxyapatite.

The protein localises to the secreted. It localises to the extracellular space. Its subcellular location is the extracellular matrix. Its function is as follows. Type I collagen is a member of group I collagen (fibrillar forming collagen). The protein is Collagen alpha-1(I) chain (COL1A1) of Bos taurus (Bovine).